The primary structure comprises 355 residues: Uroporphyrinogen decarboxylase (355 aa).

Substrate-binding positions include 27–31 (RQAGR), Asp-78, Tyr-155, Thr-210, and His-328.

The protein belongs to the uroporphyrinogen decarboxylase family. As to quaternary structure, homodimer.

The protein resides in the cytoplasm. It carries out the reaction uroporphyrinogen III + 4 H(+) = coproporphyrinogen III + 4 CO2. It participates in porphyrin-containing compound metabolism; protoporphyrin-IX biosynthesis; coproporphyrinogen-III from 5-aminolevulinate: step 4/4. Its function is as follows. Catalyzes the decarboxylation of four acetate groups of uroporphyrinogen-III to yield coproporphyrinogen-III. This chain is Uroporphyrinogen decarboxylase, found in Pseudomonas fluorescens (strain Pf0-1).